We begin with the raw amino-acid sequence, 137 residues long: MPTINQLVRKPRKSKVEKSKSPALNVGYNSHKKVQTNVSSPQKRGVATRVGTMTPRKPNSALRKFARVRLSNLIEVTAYIPGIGHNLQEHSVVLLRGGHVKDLPGVRYHIVRGALDTAGVNDRKQGRSKYGTKRPKA.

Disordered regions lie at residues 1-21 (MPTI…KSKS) and 33-57 (KVQT…TPRK). At aspartate 102 the chain carries 3-methylthioaspartic acid.

It belongs to the universal ribosomal protein uS12 family. As to quaternary structure, part of the 30S ribosomal subunit. Contacts proteins S8 and S17. May interact with IF1 in the 30S initiation complex.

In terms of biological role, with S4 and S5 plays an important role in translational accuracy. Its function is as follows. Interacts with and stabilizes bases of the 16S rRNA that are involved in tRNA selection in the A site and with the mRNA backbone. Located at the interface of the 30S and 50S subunits, it traverses the body of the 30S subunit contacting proteins on the other side and probably holding the rRNA structure together. The combined cluster of proteins S8, S12 and S17 appears to hold together the shoulder and platform of the 30S subunit. The protein is Small ribosomal subunit protein uS12 of Streptococcus pneumoniae (strain ATCC 700669 / Spain 23F-1).